Reading from the N-terminus, the 125-residue chain is Phosphoribosyl-AMP cyclohydrolase (125 aa).

Residue D74 coordinates Mg(2+). C75 contacts Zn(2+). 2 residues coordinate Mg(2+): D76 and D78. Positions 92 and 99 each coordinate Zn(2+).

It belongs to the PRA-CH family. As to quaternary structure, homodimer. Mg(2+) serves as cofactor. Requires Zn(2+) as cofactor.

The protein resides in the cytoplasm. The enzyme catalyses 1-(5-phospho-beta-D-ribosyl)-5'-AMP + H2O = 1-(5-phospho-beta-D-ribosyl)-5-[(5-phospho-beta-D-ribosylamino)methylideneamino]imidazole-4-carboxamide. Its pathway is amino-acid biosynthesis; L-histidine biosynthesis; L-histidine from 5-phospho-alpha-D-ribose 1-diphosphate: step 3/9. Functionally, catalyzes the hydrolysis of the adenine ring of phosphoribosyl-AMP. The polypeptide is Phosphoribosyl-AMP cyclohydrolase (Citrifermentans bemidjiense (strain ATCC BAA-1014 / DSM 16622 / JCM 12645 / Bem) (Geobacter bemidjiensis)).